We begin with the raw amino-acid sequence, 124 residues long: Large ribosomal subunit protein bL12 (124 aa).

It belongs to the bacterial ribosomal protein bL12 family. Homodimer. Part of the ribosomal stalk of the 50S ribosomal subunit. Forms a multimeric L10(L12)X complex, where L10 forms an elongated spine to which 2 to 4 L12 dimers bind in a sequential fashion. Binds GTP-bound translation factors.

In terms of biological role, forms part of the ribosomal stalk which helps the ribosome interact with GTP-bound translation factors. Is thus essential for accurate translation. The polypeptide is Large ribosomal subunit protein bL12 (Desulforamulus reducens (strain ATCC BAA-1160 / DSM 100696 / MI-1) (Desulfotomaculum reducens)).